A 119-amino-acid chain; its full sequence is NADH-quinone oxidoreductase subunit 7 (119 aa).

The next 3 helical transmembrane spans lie at 11 to 31 (LIYV…GALL), 59 to 79 (VHFY…AFLW), and 88 to 108 (LGLY…VGFL).

Belongs to the complex I subunit 3 family. NDH-1 is composed of 15 different subunits, Nqo1 to Nqo15. The complex has a L-shaped structure, with the hydrophobic arm (subunits Nqo7, Nqo8 and Nqo10 to Nqo14) embedded in the membrane and the hydrophilic peripheral arm (subunits Nqo1 to Nqo6, Nqo9 and Nqo15) protruding into the bacterial cytoplasm. The hydrophilic domain contains all the redox centers.

It is found in the cell inner membrane. It carries out the reaction a quinone + NADH + 5 H(+)(in) = a quinol + NAD(+) + 4 H(+)(out). In terms of biological role, NDH-1 shuttles electrons from NADH, via FMN and iron-sulfur (Fe-S) centers, to quinones in the respiratory chain. The immediate electron acceptor for the enzyme in this species is menaquinone. Couples the redox reaction to proton translocation (for every two electrons transferred, four hydrogen ions are translocated across the cytoplasmic membrane), and thus conserves the redox energy in a proton gradient required for the synthesis of ATP. The sequence is that of NADH-quinone oxidoreductase subunit 7 (nqo7) from Thermus thermophilus (strain ATCC 27634 / DSM 579 / HB8).